The chain runs to 118 residues: Histone H2B.N (118 aa).

The protein belongs to the histone H2B family. As to quaternary structure, the nucleosome is a histone octamer containing two molecules each of H2A, H2B, H3 and H4 assembled in one H3-H4 heterotetramer and two H2A-H2B heterodimers. The octamer wraps approximately 147 bp of DNA. In terms of tissue distribution, expressed in germline. Predominantly expressed in oocytes.

Its subcellular location is the nucleus. It is found in the chromosome. Functionally, core component of nucleosome. Nucleosomes wrap and compact DNA into chromatin, limiting DNA accessibility to the cellular machineries which require DNA as a template. Histones thereby play a central role in transcription regulation, DNA repair, DNA replication and chromosomal stability. DNA accessibility is regulated via a complex set of post-translational modifications of histones, also called histone code, and nucleosome remodeling. This chain is Histone H2B.N, found in Homo sapiens (Human).